A 242-amino-acid chain; its full sequence is Type III pantothenate kinase (242 aa).

7-14 (DLGNSRFK) is a binding site for ATP. Substrate-binding positions include Tyr-91 and 98–101 (GVDR). Asp-100 acts as the Proton acceptor in catalysis. Thr-121 is an ATP binding site. Thr-171 is a substrate binding site.

The protein belongs to the type III pantothenate kinase family. Homodimer. Requires NH4(+) as cofactor. K(+) is required as a cofactor.

It localises to the cytoplasm. It carries out the reaction (R)-pantothenate + ATP = (R)-4'-phosphopantothenate + ADP + H(+). The protein operates within cofactor biosynthesis; coenzyme A biosynthesis; CoA from (R)-pantothenate: step 1/5. In terms of biological role, catalyzes the phosphorylation of pantothenate (Pan), the first step in CoA biosynthesis. This Xanthomonas campestris pv. campestris (strain B100) protein is Type III pantothenate kinase.